Reading from the N-terminus, the 1939-residue chain is Myosin-2 (1939 aa).

One can recognise a Myosin N-terminal SH3-like domain in the interval 33 to 82; that stretch reads DAKTSVFVAEPKESFVKGTIQSREGGKVTVKTEAGATLTVKEDQVFPMNP. A phosphothreonine mark is found at T64 and T69. The Myosin motor domain occupies 86–782; sequence DKIEDMAMMT…LLGLLEEMRD (697 aa). Residue K130 is modified to N6,N6,N6-trimethyllysine. 179 to 186 contacts ATP; that stretch reads GESGAGKT. Y389 is modified (phosphotyrosine). Position 392 is a phosphoserine (S392). T419 carries the phosphothreonine modification. A Phosphoserine modification is found at S625. Residues 659–681 are actin-binding; the sequence is LNKLMTNLRSTHPHFVRCIIPNE. H757 carries the pros-methylhistidine modification. The actin-binding stretch occupies residues 761-775; the sequence is KFGHTKVFFKAGLLG. The IQ domain occupies 785–814; it reads LAQLITRTQARCRGFLARVEYQKMVERRES. Residues 843 to 1939 are a coiled coil; the sequence is LLKSAESEKE…EVHTKVISEE (1097 aa). Phosphoserine is present on residues S1092 and S1096. Disordered stretches follow at residues 1126 to 1147 and 1153 to 1172; these read IEAE…SREL and RLEE…KKRE. A compositionally biased stretch (basic and acidic residues) spans 1128–1147; it reads AERASRAKAEKQRSDLSREL. Phosphoserine occurs at positions 1162 and 1237. Residue T1241 is modified to Phosphothreonine. S1243 bears the Phosphoserine mark. The residue at position 1255 (T1255) is a Phosphothreonine. S1261 carries the phosphoserine modification. Residue T1286 is modified to Phosphothreonine. S1288, S1292, S1303, and S1306 each carry phosphoserine. Y1464 bears the Phosphotyrosine mark. A Phosphothreonine modification is found at T1467. At S1474 the chain carries Phosphoserine. At Y1492 the chain carries Phosphotyrosine. At S1495 the chain carries Phosphoserine. T1501 carries the post-translational modification Phosphothreonine. Position 1514 is a phosphoserine (S1514). T1517 is subject to Phosphothreonine. Residues S1542, S1554, S1574, S1600, S1603, S1714, and S1726 each carry the phosphoserine modification. 2 positions are modified to phosphothreonine: T1730 and T1736. A Phosphoserine modification is found at S1739. The tract at residues 1885–1915 is disordered; it reads QAEEAEEQSNTNLSKFRKLQHELEEAEERAD.

The protein belongs to the TRAFAC class myosin-kinesin ATPase superfamily. Myosin family. Muscle myosin is a hexameric protein that consists of 2 heavy chain subunits (MHC), 2 alkali light chain subunits (MLC) and 2 regulatory light chain subunits (MLC-2). Interacts with GCSAM.

The protein resides in the cytoplasm. It is found in the myofibril. In terms of biological role, myosins are actin-based motor molecules with ATPase activity essential for muscle contraction. The polypeptide is Myosin-2 (MYH2) (Sus scrofa (Pig)).